The chain runs to 704 residues: Elongation factor G 1 (704 aa).

The tr-type G domain maps to 8–290 (ERYRNIGICA…CVVEYMPAPT (283 aa)). GTP is bound by residues 17-24 (AHVDAGKT), 88-92 (DTPGH), and 142-145 (NKMD).

Belongs to the TRAFAC class translation factor GTPase superfamily. Classic translation factor GTPase family. EF-G/EF-2 subfamily.

It localises to the cytoplasm. Its function is as follows. Catalyzes the GTP-dependent ribosomal translocation step during translation elongation. During this step, the ribosome changes from the pre-translocational (PRE) to the post-translocational (POST) state as the newly formed A-site-bound peptidyl-tRNA and P-site-bound deacylated tRNA move to the P and E sites, respectively. Catalyzes the coordinated movement of the two tRNA molecules, the mRNA and conformational changes in the ribosome. In Pseudoalteromonas translucida (strain TAC 125), this protein is Elongation factor G 1.